A 1113-amino-acid chain; its full sequence is Nucleoporin NUP116/NSP116 (1113 aa).

A disordered region spans residues 1–35; that stretch reads MFGVSRGAFPSATTQPFGSTGSTFGGQQQQQQPVA. 4 FG repeats span residues 2-3, 17-18, 24-25, and 40-41; these read FG. Residues 13–33 are compositionally biased toward low complexity; that stretch reads TTQPFGSTGSTFGGQQQQQQP. The disordered stretch occupies residues 49-91; it reads TQAPAFGNFGNQTSNSPFGMSGSTTANGTPFGQSQLTNNNASG. One copy of the GLFG 1; approximate repeat lies at 55–58; the sequence is GNFG. 3 FG repeats span residues 66-67, 79-80, and 94-95; these read FG. Positions 92–172 are interaction with AFG2; that stretch reads SIFGGMGNNT…AGRKFGTSQN (81 aa). Residues 110–166 form a GLE2 binding sequence (GLEBS) region; the sequence is VVPNSTAGTSIKPFTTFEEKDPTTGVINVFQSITCMPEYRNFSFEELRFQDYQAGRK. An interaction with MEX67, not KAP95 region spans residues 160–362; sequence DYQAGRKFGT…AKPASGGLFG (203 aa). 2 FG repeats span residues 167–168 and 189–190; these read FG. The GLFG 2 repeat unit spans residues 205-208; the sequence is GLFG. A GLFG 3; approximate repeat occupies 214–217; that stretch reads GMFG. The GLFG 4; approximate repeat unit spans residues 224–227; it reads GGFG. The stretch at 235 to 238 is one GLFG 5 repeat; that stretch reads GLFG. An FG 10 repeat occupies 249–250; the sequence is FG. 3 GLFG repeats span residues 259–262, 276–279, and 288–291; these read GLFG. The segment covering 265 to 279 has biased composition (low complexity); sequence TNNPTNGTNNTGLFG. A disordered region spans residues 265-341; it reads TNNPTNGTNN…SNANANGGAF (77 aa). Residues 280–304 show a composition bias toward polar residues; sequence QQNSNTNGGLFGQQQNSFGANNVSN. The FG 11 repeat unit spans residues 297–298; that stretch reads FG. The stretch at 306–309 is one GLFG 9; approximate repeat; it reads GAFG. The stretch at 327-330 is one GLFG 10; approximate repeat; sequence GIFG. Low complexity predominate over residues 330 to 341; that stretch reads GQSNANANGGAF. Residues 339-342 form a GLFG 11; approximate repeat; sequence GAFG. The FG 12 repeat unit spans residues 351-352; that stretch reads FG. The stretch at 359–362 is one GLFG 12 repeat; the sequence is GLFG. The sufficient for interaction with MEX67 and KAP95 stretch occupies residues 362–535; that stretch reads GQSAGSKAFG…GAKPTGFGNT (174 aa). The stretch at 370 to 371 is one FG 13 repeat; the sequence is FG. Residues 371 to 606 form a disordered region; sequence GMNTNPTGTT…NPASTSGGLF (236 aa). 4 GLFG repeats span residues 382–385, 395–398, 407–410, and 420–423; these read GLFG. Low complexity predominate over residues 410–438; sequence GQNNQSQNQSGLFGQQNSSNAFGQPQQQG. Residues 431–432 form an FG 14 repeat; that stretch reads FG. GLFG repeat units lie at residues 439 to 442 and 448 to 451; these read GLFG. Polar residues predominate over residues 451-464; the sequence is GQQQGASTFASGNA. 2 stretches are compositionally biased toward low complexity: residues 465–478 and 485–522; these read QNNS…QQQQ and GQQN…QQNN. One copy of the FG 15 repeat lies at 470-471; the sequence is FG. GLFG repeat units follow at residues 482-485 and 497-500; these read GLFG. FG repeat units lie at residues 510–511, 525–526, and 532–533; these read FG. Residues 532–569 show a composition bias toward polar residues; the sequence is FGNTSLFSNSTTNQSNGISGNNLQQQSGGLFQNKQQPA. The tract at residues 536-732 is interaction with KAP95, not MEX67; that stretch reads SLFSNSTTNQ…QSQNALQQQQ (197 aa). GLFG repeat units lie at residues 572–575, 585–588, and 604–607; these read GLFG. Polar residues predominate over residues 588–603; sequence GNNQVANQNNPASTSG. An FG 19 repeat occupies 616 to 617; the sequence is FG. One copy of the GLFG 24; approximate repeat lies at 630–633; sequence GIFG. 3 GLFG repeats span residues 648-651, 665-668, and 683-686; these read GLFG. A compositionally biased stretch (low complexity) spans 678–691; the sequence is SNGSTGLFGSNNTS. Disordered stretches follow at residues 678-736 and 868-939; these read SNGS…QQQR and SEEK…ENVA. Residues 692-708 show a composition bias toward polar residues; that stretch reads QSTNAGGLFQNNTSTNT. Residues 719-736 show a composition bias toward low complexity; the sequence is QSMAQSQNALQQQQQQQR. Residue S886 is modified to Phosphoserine. Residues 916 to 939 are compositionally biased toward basic and acidic residues; the sequence is NDGEDSATKHHSRNMDEENKENVA. Positions 967-1109 constitute a Peptidase S59 domain; sequence NENYYISPSL…GTYVFIVNHA (143 aa). An interaction with NUP82 NPC subcomplex region spans residues 967–1113; it reads NENYYISPSL…FIVNHAAEQT (147 aa). The segment at 969 to 1108 is nucleoporin RNA-binding motif (NRM); the sequence is NYYISPSLDT…SGTYVFIVNH (140 aa).

Belongs to the nucleoporin GLFG family. Component of the nuclear pore complex (NPC). NPC constitutes the exclusive means of nucleocytoplasmic transport. NPCs allow the passive diffusion of ions and small molecules and the active, nuclear transport receptor-mediated bidirectional transport of macromolecules such as proteins, RNAs, ribonucleoparticles (RNPs), and ribosomal subunits across the nuclear envelope. Due to its 8-fold rotational symmetry, all subunits are present with 8 copies or multiples thereof. NUP116 interacts with the NUP82 subcomplex and GLE2. Through its FG repeats it interacts with numerous karyopherins including KAP95, PSE1 (GSP1-GDP dependent), MEX67, and to homomeric RNA. Interacts with CEX1. Interacts (via N-terminus) with AFG2 (via N-terminus).

It is found in the nucleus. The protein resides in the nuclear pore complex. It localises to the nucleus membrane. Functions as a component of the nuclear pore complex (NPC). NPC components, collectively referred to as nucleoporins (NUPs), can play the role of both NPC structural components and of docking or interaction partners for transiently associated nuclear transport factors. Active directional transport is assured by both, a Phe-Gly (FG) repeat affinity gradient for these transport factors across the NPC and a transport cofactor concentration gradient across the nuclear envelope (GSP1 and GSP2 GTPases associated predominantly with GTP in the nucleus, with GDP in the cytoplasm). Plays an important role in several nuclear export and import pathways including poly(A)+ RNA, tRNA, pre-ribosome, and protein transport. By binding ATPase AFG2, promotes AFG2-mediated release of shuttling protein RLP24 from pre-60S ribosomal particles. This is Nucleoporin NUP116/NSP116 (NUP116) from Saccharomyces cerevisiae (strain ATCC 204508 / S288c) (Baker's yeast).